Consider the following 1673-residue polypeptide: NBPF family member NBPF26 (1673 aa).

EGF-like domains lie at 24–63 (HALQ…EYCQ), 64–102 (HRDP…EDCQ), 105–143 (TPHP…KECQ), and 144–180 (WTDA…QKCE). Intrachain disulfides connect cysteine 28–cysteine 41, cysteine 35–cysteine 51, cysteine 53–cysteine 62, cysteine 68–cysteine 79, cysteine 73–cysteine 90, cysteine 92–cysteine 101, cysteine 109–cysteine 121, cysteine 115–cysteine 131, cysteine 133–cysteine 142, cysteine 148–cysteine 159, cysteine 153–cysteine 168, cysteine 170–cysteine 179, cysteine 186–cysteine 198, cysteine 192–cysteine 207, cysteine 209–cysteine 218, cysteine 225–cysteine 236, and cysteine 230–cysteine 246. The EGF-like 5; calcium-binding domain maps to 182-219 (DVNECDIPGHCQHGGTCLNLPGSYQCQCLQGFTGQYCD). The EGF-like 6 domain maps to 221–258 (LYVPCAHSPCVNGGTCRQTGDFTFECNCLPVPDSTSSA). Positions 337-381 (RQFKEEKLAEQLKQAEELRQYKVLVHSQERELTQLKEKLREGRDA) form a coiled coil. Disordered regions lie at residues 423–463 (KLSP…KVPE), 713–734 (EKVQ…EVPE), and 782–828 (WEDA…EGYS). The segment covering 427 to 443 (ENDEDEDEDVQVEEDEK) has biased composition (acidic residues). Olduvai domains are found at residues 427–521 (ENDE…NILP), 698–790 (ENDN…HIIP), 791–879 (ENES…ATGP), 882–937 (SREL…VDMD), 938–1029 (EIEK…PSCP), 1032–1104 (SGEL…PSCP), 1107–1162 (SREL…LDVD), 1163–1255 (RIKK…RSKK), 1256–1348 (ERRR…PSCP), 1351–1423 (SREL…PSCP), 1426–1481 (SREL…LDVD), 1482–1574 (RIKK…RSKK), and 1575–1673 (ERRR…IFPQ). Over residues 452–463 (EVQKTEESKVPE) the composition is skewed to basic and acidic residues. 2 stretches are compositionally biased toward acidic residues: residues 792–801 (NESDDEEEEE) and 812–824 (ESEE…ESWD). The tract at residues 1242 to 1280 (KGKGKKRRGRRSKKERRRGRKEGEEDQNPPCPRLSRELL) is disordered. The span at 1243-1261 (GKGKKRRGRRSKKERRRGR) shows a compositional bias: basic residues. Residues 1561–1594 (KGKGKKRRGRRSKKERRRGRKEGEEDQNPPCPRL) are disordered. The segment covering 1562–1580 (GKGKKRRGRRSKKERRRGR) has biased composition (basic residues).

The protein belongs to the NBPF family.

It is found in the cytoplasm. This chain is NBPF family member NBPF26, found in Homo sapiens (Human).